Consider the following 323-residue polypeptide: 4-hydroxy-3-methylbut-2-enyl diphosphate reductase (323 aa).

C13 provides a ligand contact to [4Fe-4S] cluster. H42 and H75 together coordinate (2E)-4-hydroxy-3-methylbut-2-enyl diphosphate. Positions 42 and 75 each coordinate dimethylallyl diphosphate. Isopentenyl diphosphate contacts are provided by H42 and H75. C97 contacts [4Fe-4S] cluster. H125 is a binding site for (2E)-4-hydroxy-3-methylbut-2-enyl diphosphate. H125 is a dimethylallyl diphosphate binding site. H125 contacts isopentenyl diphosphate. E127 (proton donor) is an active-site residue. A (2E)-4-hydroxy-3-methylbut-2-enyl diphosphate-binding site is contributed by T168. C198 is a binding site for [4Fe-4S] cluster. Positions 226, 227, 228, and 270 each coordinate (2E)-4-hydroxy-3-methylbut-2-enyl diphosphate. Residues S226, S227, N228, and S270 each coordinate dimethylallyl diphosphate. The isopentenyl diphosphate site is built by S226, S227, N228, and S270.

The protein belongs to the IspH family. The cofactor is [4Fe-4S] cluster.

It carries out the reaction isopentenyl diphosphate + 2 oxidized [2Fe-2S]-[ferredoxin] + H2O = (2E)-4-hydroxy-3-methylbut-2-enyl diphosphate + 2 reduced [2Fe-2S]-[ferredoxin] + 2 H(+). It catalyses the reaction dimethylallyl diphosphate + 2 oxidized [2Fe-2S]-[ferredoxin] + H2O = (2E)-4-hydroxy-3-methylbut-2-enyl diphosphate + 2 reduced [2Fe-2S]-[ferredoxin] + 2 H(+). The protein operates within isoprenoid biosynthesis; dimethylallyl diphosphate biosynthesis; dimethylallyl diphosphate from (2E)-4-hydroxy-3-methylbutenyl diphosphate: step 1/1. It participates in isoprenoid biosynthesis; isopentenyl diphosphate biosynthesis via DXP pathway; isopentenyl diphosphate from 1-deoxy-D-xylulose 5-phosphate: step 6/6. Functionally, catalyzes the conversion of 1-hydroxy-2-methyl-2-(E)-butenyl 4-diphosphate (HMBPP) into a mixture of isopentenyl diphosphate (IPP) and dimethylallyl diphosphate (DMAPP). Acts in the terminal step of the DOXP/MEP pathway for isoprenoid precursor biosynthesis. In Nitrosomonas europaea (strain ATCC 19718 / CIP 103999 / KCTC 2705 / NBRC 14298), this protein is 4-hydroxy-3-methylbut-2-enyl diphosphate reductase.